We begin with the raw amino-acid sequence, 494 residues long: Aspartyl/glutamyl-tRNA(Asn/Gln) amidotransferase subunit B (494 aa).

The protein belongs to the GatB/GatE family. GatB subfamily. In terms of assembly, heterotrimer of A, B and C subunits.

The enzyme catalyses L-glutamyl-tRNA(Gln) + L-glutamine + ATP + H2O = L-glutaminyl-tRNA(Gln) + L-glutamate + ADP + phosphate + H(+). It carries out the reaction L-aspartyl-tRNA(Asn) + L-glutamine + ATP + H2O = L-asparaginyl-tRNA(Asn) + L-glutamate + ADP + phosphate + 2 H(+). In terms of biological role, allows the formation of correctly charged Asn-tRNA(Asn) or Gln-tRNA(Gln) through the transamidation of misacylated Asp-tRNA(Asn) or Glu-tRNA(Gln) in organisms which lack either or both of asparaginyl-tRNA or glutaminyl-tRNA synthetases. The reaction takes place in the presence of glutamine and ATP through an activated phospho-Asp-tRNA(Asn) or phospho-Glu-tRNA(Gln). The polypeptide is Aspartyl/glutamyl-tRNA(Asn/Gln) amidotransferase subunit B (Rhodopseudomonas palustris (strain HaA2)).